The primary structure comprises 172 residues: Disulfide bond formation protein B (172 aa).

Residues 1-16 (MNLFASLNQFSKNRIS) lie on the Cytoplasmic side of the membrane. A helical transmembrane segment spans residues 17-33 (WLLLLLFVVFFEGAALF). Over 34–51 (FQHVMMLSPCVMCIYERV) the chain is Periplasmic. A disulfide bridge connects residues cysteine 43 and cysteine 46. The chain crosses the membrane as a helical span at residues 52–67 (AMLGVGGAALFGLIAP). The Cytoplasmic portion of the chain corresponds to 68–74 (NNPLVRW). A helical membrane pass occupies residues 75–92 (LGLAAWGASAYKGLALSL). The Periplasmic portion of the chain corresponds to 93 to 147 (QHVDYQFNPSPFATCDLFVTFPDWAPLNQWAPWMFEAYGDCSKIVWQFMTLSMPQ). Cysteines 107 and 133 form a disulfide. A helical transmembrane segment spans residues 148 to 166 (WLVIIFAGNLVALAFIVIA). The Cytoplasmic segment spans residues 167–172 (QFFKSK).

It belongs to the DsbB family.

The protein resides in the cell inner membrane. Functionally, required for disulfide bond formation in some periplasmic proteins. Acts by oxidizing the DsbA protein. The sequence is that of Disulfide bond formation protein B from Vibrio vulnificus (strain CMCP6).